Consider the following 334-residue polypeptide: Beta-ketoacyl-[acyl-carrier-protein] synthase III (334 aa).

Catalysis depends on residues Cys114 and His260. The tract at residues 261–265 (QANLR) is ACP-binding. Asn290 is an active-site residue.

This sequence belongs to the thiolase-like superfamily. FabH family. As to quaternary structure, homodimer.

The protein localises to the cytoplasm. It carries out the reaction malonyl-[ACP] + acetyl-CoA + H(+) = 3-oxobutanoyl-[ACP] + CO2 + CoA. Its pathway is lipid metabolism; fatty acid biosynthesis. Catalyzes the condensation reaction of fatty acid synthesis by the addition to an acyl acceptor of two carbons from malonyl-ACP. Catalyzes the first condensation reaction which initiates fatty acid synthesis and may therefore play a role in governing the total rate of fatty acid production. Possesses both acetoacetyl-ACP synthase and acetyl transacylase activities. Its substrate specificity determines the biosynthesis of branched-chain and/or straight-chain of fatty acids. This Clostridium tetani (strain Massachusetts / E88) protein is Beta-ketoacyl-[acyl-carrier-protein] synthase III.